We begin with the raw amino-acid sequence, 436 residues long: 3-ketoacyl-CoA thiolase (436 aa).

Cysteine 99 (acyl-thioester intermediate) is an active-site residue. Residues histidine 392 and cysteine 422 each act as proton acceptor in the active site.

Belongs to the thiolase-like superfamily. Thiolase family. In terms of assembly, heterotetramer of two alpha chains (FadJ) and two beta chains (FadI).

The protein localises to the cytoplasm. It carries out the reaction an acyl-CoA + acetyl-CoA = a 3-oxoacyl-CoA + CoA. It participates in lipid metabolism; fatty acid beta-oxidation. Functionally, catalyzes the final step of fatty acid oxidation in which acetyl-CoA is released and the CoA ester of a fatty acid two carbons shorter is formed. The chain is 3-ketoacyl-CoA thiolase from Shewanella sediminis (strain HAW-EB3).